Consider the following 71-residue polypeptide: U3-scytotoxin-Sth1h (71 aa).

An N-terminal signal peptide occupies residues 1 to 33 (MSQNSITSYKMGFAKHFFLFAVLLCATAMYSVA). The propeptide occupies 34 to 39 (EPAQER). 3 cysteine pairs are disulfide-bonded: Cys46/Cys60, Cys53/Cys64, and Cys59/Cys69.

As to expression, expressed by the venom gland.

It is found in the secreted. Its function is as follows. Probable insect neurotoxin with ion channel impairing activity. Does not show activity on 45 human receptors from 9 families (5-hydroxytryptamine, adrenergic, dopamine, muscarinic, histamine, neurotransmitter, opioid, sigma, and gaba(A) receptors). In vivo, when mixed with U3-SYTX-Sth1a does not cause paralytic or lethal activity when injected into crickets. It is noteworthy that crickets are evolutionarily distant from prey species. In Scytodes thoracica (Spitting spider), this protein is U3-scytotoxin-Sth1h.